An 858-amino-acid chain; its full sequence is Leucine--tRNA ligase (858 aa).

Positions 42–52 (PYPSGRLHMGH) match the 'HIGH' region motif. A 'KMSKS' region motif is present at residues 618–622 (KMSKS). Lys621 is a binding site for ATP.

This sequence belongs to the class-I aminoacyl-tRNA synthetase family.

The protein resides in the cytoplasm. It catalyses the reaction tRNA(Leu) + L-leucine + ATP = L-leucyl-tRNA(Leu) + AMP + diphosphate. This is Leucine--tRNA ligase from Photobacterium profundum (strain SS9).